Here is a 174-residue protein sequence, read N- to C-terminus: Thiol-disulfide oxidoreductase ResA (174 aa).

Residues 11 to 30 (TVILLLLLAALGYTIYANFF) form a helical; Signal-anchor for type II membrane protein membrane-spanning segment. A Thioredoxin domain is found at 36 to 174 (VAVGSTAPDF…IKQHLESIKP (139 aa)). An intrachain disulfide couples Cys-74 to Cys-77.

It belongs to the thioredoxin family. ResA subfamily.

The protein localises to the cell membrane. It functions in the pathway protein modification; cytochrome c assembly. Its function is as follows. Thiol-disulfide oxidoreductase which is required in disulfide reduction during c-type cytochrome synthesis. May accept reducing equivalents from CcdA, leading to breakage of disulfide bonds in apocytochrome c; following this reduction heme can be covalently attached. The chain is Thiol-disulfide oxidoreductase ResA from Geobacillus thermodenitrificans (strain NG80-2).